Here is a 200-residue protein sequence, read N- to C-terminus: Urease accessory protein UreG (200 aa).

Residue 8 to 15 coordinates GTP; the sequence is GPVGSGKT.

It belongs to the SIMIBI class G3E GTPase family. UreG subfamily. In terms of assembly, homodimer. UreH, UreF and UreG form a complex that acts as a GTP-hydrolysis-dependent molecular chaperone, activating the urease apoprotein by helping to assemble the nickel containing metallocenter of UreC. The UreE protein probably delivers the nickel.

It localises to the cytoplasm. Its function is as follows. Facilitates the functional incorporation of the urease nickel metallocenter. This process requires GTP hydrolysis, probably effectuated by UreG. This is Urease accessory protein UreG from Helicobacter hepaticus (strain ATCC 51449 / 3B1).